Reading from the N-terminus, the 455-residue chain is Proline--tRNA ligase (455 aa).

L-proline is bound by residues T101, E103, and R132. R132, E134, Q216, and T219 together coordinate ATP. An L-proline-binding site is contributed by H221. 2 residues coordinate ATP: S253 and R255. Positions 329 to 359 (EIKGVPLRIEVGPKDIENKKITLFRRDTMEK) are interaction with tRNA.

This sequence belongs to the class-II aminoacyl-tRNA synthetase family. ProS type 3 subfamily. As to quaternary structure, homodimer. The dimer is functionally asymmetric: only one of the two active sites at a time is able to form prolyl-adenylate, and only one tRNA molecule binds per dimer.

The protein resides in the cytoplasm. It catalyses the reaction tRNA(Pro) + L-proline + ATP = L-prolyl-tRNA(Pro) + AMP + diphosphate. Inhibited by high concentrations of prolinamide. Functionally, catalyzes the attachment of proline to tRNA(Pro) in a two-step reaction: proline is first activated by ATP to form Pro-AMP and then transferred to the acceptor end of tRNA(Pro). Can inadvertently accommodate and process non-cognate amino acids such as cysteine and alanine. The polypeptide is Proline--tRNA ligase (proS) (Methanocaldococcus jannaschii (strain ATCC 43067 / DSM 2661 / JAL-1 / JCM 10045 / NBRC 100440) (Methanococcus jannaschii)).